A 50-amino-acid polypeptide reads, in one-letter code: Sperm protamine P1 (50 aa).

Disulfide bonds link Cys-7–Cys-15 and Cys-39–Cys-47.

It belongs to the protamine P1 family. Cross-linked by interchain disulfide bonds around the DNA-helix. As to expression, testis.

It is found in the nucleus. It localises to the chromosome. In terms of biological role, protamines substitute for histones in the chromatin of sperm during the haploid phase of spermatogenesis. They compact sperm DNA into a highly condensed, stable and inactive complex. This is Sperm protamine P1 (PRM1) from Sus scrofa (Pig).